Reading from the N-terminus, the 1330-residue chain is Ubinuclein-2 (1330 aa).

The disordered stretch occupies residues 1 to 133 (MAEPRRVAFI…PRETVRLELV (133 aa)). Ser-13 carries the post-translational modification Phosphoserine. Composition is skewed to basic and acidic residues over residues 16–37 (RRREAEFPGTEREPEYPREPPR) and 67–79 (PREKPLPQREVSR). Residues 93–111 (PEPPPPPLPQLHLQPPPPR) show a composition bias toward pro residues. Over residues 123-133 (PPRETVRLELV) the composition is skewed to basic and acidic residues. The residue at position 244 (Thr-244) is a Phosphothreonine. Residues 249-304 (QASDTEEDDTTDNQKHKPPKIPKIKEDDIEMKKRKRKEEGEKEKKPRKKVPKQLGV) form a disordered region. Phosphoserine is present on Ser-251. At Thr-253 the chain carries Phosphothreonine. Lys-273 participates in a covalent cross-link: Glycyl lysine isopeptide (Lys-Gly) (interchain with G-Cter in SUMO2). Position 312 is a phosphoserine (Ser-312). The tract at residues 336-356 (KDALKKESNPKTPLNFSTSSL) is disordered. Positions 345–356 (PKTPLNFSTSSL) are enriched in polar residues. 4 positions are modified to phosphoserine: Ser-417, Ser-420, Ser-423, and Ser-585. 7 disordered regions span residues 574–597 (FQTDEEREKNGSEEDDEEKPGKRV), 672–730 (LTSA…STPV), 802–833 (PKKLDSTQTAHSSSLIAGHTGPVPKKPQDLAH), 864–913 (GLQR…VTKV), 938–988 (PVVK…SRTV), 1017–1201 (MAAS…GSSV), and 1308–1330 (HVQQTFNDGGQSKGDTKLPRKSQ). Basic and acidic residues-rich tracts occupy residues 575 to 585 (QTDEEREKNGS) and 688 to 699 (KVKECSPKKDQK). The span at 701–730 (PASSVASVGGPSTSSSTSAVASTSSGSTPV) shows a compositional bias: low complexity. Polar residues predominate over residues 807 to 816 (STQTAHSSSL). Residues 864-895 (GLQRSSQIHASSSSQTHVSSSSQAQVAASSHT) are compositionally biased toward low complexity. Polar residues-rich tracts occupy residues 896–913 (LGTSEAQDASPLTQVTKV) and 938–956 (PVVKLSNNPQLSCSSPLTK). Low complexity predominate over residues 1017–1029 (MAASPKLASSPKP). Over residues 1030–1044 (ATSPKPLPSPKPSAS) the composition is skewed to pro residues. Low complexity-rich tracts occupy residues 1045–1054 (PKPSQSAKPS) and 1061–1079 (SKSNPTPKPTVSPSSSSPN). Lys-1052 is modified (N6-acetyllysine). 3 stretches are compositionally biased toward polar residues: residues 1082 to 1148 (VAQS…NSLS), 1158 to 1169 (RGSNLNSSGANR), and 1308 to 1317 (HVQQTFNDGG). Residue Ser-1107 is modified to Phosphoserine. N6-acetyllysine is present on Lys-1132. Positions 1321–1330 (GDTKLPRKSQ) are enriched in basic and acidic residues.

The protein belongs to the ubinuclein family.

The polypeptide is Ubinuclein-2 (UBN2) (Bos taurus (Bovine)).